The chain runs to 42 residues: uncharacterized protein (42 aa).

Residues F5 to I27 form a helical membrane-spanning segment.

Its subcellular location is the membrane. This is an uncharacterized protein from Saccharomyces cerevisiae (strain ATCC 204508 / S288c) (Baker's yeast).